Reading from the N-terminus, the 347-residue chain is MTKNNQSISYKDAGVDIDAGNALVEAIKPIAKATARPEVSTSLGGFGALFELPMDKYKNPLLVSGTDGVGTKLRLAIESGKHDQVGIDLVAMCVNDLIVQGAEPLFFLDYYATGKLDIYTARDVVAGIGEGCQQSGCALIGGETAEMPGMYPDGDYDLAGFCVGIVEKADLIDGTKVKAGDVLLGLASSGPHSNGYSLIRKIIEVNGANLNEECDGQPLIDALMAPTRIYVKSILALMKQIEIHAISHITGGGLLENLPRVMPNNTKAKVDTKSWNRPAVFDWIQTHGNVEFHEMHRTLNCGIGMVVVVDEKDQQAAIDALTAQGEVVSVIGKIESSESETPEVDLV.

This sequence belongs to the AIR synthase family.

It localises to the cytoplasm. It carries out the reaction 2-formamido-N(1)-(5-O-phospho-beta-D-ribosyl)acetamidine + ATP = 5-amino-1-(5-phospho-beta-D-ribosyl)imidazole + ADP + phosphate + H(+). It participates in purine metabolism; IMP biosynthesis via de novo pathway; 5-amino-1-(5-phospho-D-ribosyl)imidazole from N(2)-formyl-N(1)-(5-phospho-D-ribosyl)glycinamide: step 2/2. The chain is Phosphoribosylformylglycinamidine cyclo-ligase from Hydrogenovibrio crunogenus (strain DSM 25203 / XCL-2) (Thiomicrospira crunogena).